A 492-amino-acid chain; its full sequence is Dipeptide and tripeptide permease A (492 aa).

Residues 1–20 (MSTANKHPEAASLNAFKQPR) lie on the Cytoplasmic side of the membrane. Residues 21 to 43 (SFYLIFSIELWERFGYYGLQGIM) traverse the membrane as a helical segment. Topologically, residues 44–58 (AVYLVKMLGMSEAQS) are periplasmic. Residues 59-79 (ITLFASFSALVYGLIAVGGWL) traverse the membrane as a helical segment. Residues 80-88 (GDKVLGTKR) are Cytoplasmic-facing. A helical transmembrane segment spans residues 89–109 (VIVLGTLVLALGYALVAWSGH). A topological domain (periplasmic) is located at residue D110. Residues 111–131 (IAMIYFGMATIAVGNGLFKAN) traverse the membrane as a helical segment. Residues 132–152 (PSSLLSTCYEKDDPRLDGAFT) lie on the Cytoplasmic side of the membrane. Residues 153 to 173 (MYYMAINIGSFFSMLATPWLA) traverse the membrane as a helical segment. At 174–178 (AQFGW) the chain is on the periplasmic side. The chain crosses the membrane as a helical span at residues 179–199 (STAFGLSFVGMLITLVNFMFF). At 200-217 (RKWVKDHGSKPDFAPLNM) the chain is on the cytoplasmic side. Residues 218 to 238 (GKLLVTLLGIAVMIAAATWLL) traverse the membrane as a helical segment. At 239–245 (HNQDIAR) the chain is on the periplasmic side. A helical membrane pass occupies residues 246-266 (MVLGAVAVAIVVIFTKEALTL). Topologically, residues 267 to 273 (KGAARRK) are cytoplasmic. The helical transmembrane segment at 274 to 294 (MIVAFLLMLEAIVFFVLYMQM) threads the bilayer. At 295 to 319 (PTSLNFFAIRNVEHSLLGIAFQPEQ) the chain is on the periplasmic side. A helical transmembrane segment spans residues 320–340 (FQALNPFWIMIFSPLLAALYN). At 341 to 351 (KLGDRMPMPHK) the chain is on the cytoplasmic side. Residues 352 to 372 (FALGMVLCSAAFLVLPLGASL) form a helical membrane-spanning segment. At 373–377 (ANKMG) the chain is on the periplasmic side. A helical membrane pass occupies residues 378–398 (IVSVGWLVLSYALQSVGELMI). Over 399 to 413 (SGLGLAMVAQLVPQR) the chain is Cytoplasmic. A helical membrane pass occupies residues 414-434 (LMGFIMGSWFLTTAGAAMVAG). Residues 435–458 (KVANLMAVPENITNPLLSLHVYGD) are Periplasmic-facing. The helical transmembrane segment at 459-479 (IFFKIGITTGVIAVLMILAAP) threads the bilayer. Over 480-492 (LLNRMTQDEQPGV) the chain is Cytoplasmic.

This sequence belongs to the major facilitator superfamily. Proton-dependent oligopeptide transporter (POT/PTR) (TC 2.A.17) family. DtpA subfamily.

The protein localises to the cell inner membrane. Functionally, proton-dependent permease that transports di- and tripeptides. The polypeptide is Dipeptide and tripeptide permease A (Erwinia pyrifoliae (strain DSM 12163 / CIP 106111 / Ep16/96)).